Consider the following 335-residue polypeptide: Methyltransferase pgmE (335 aa).

It belongs to the methyltransferase superfamily.

The protein operates within pigment biosynthesis. It participates in secondary metabolite biosynthesis. In terms of biological role, methyltransferase; part of the gene cluster that mediates the biosynthesis of pleosporalin A, ascomycone A, as well as a third cryptic naphthoquinone derived pigment, all responsible for the coloration of conidia. Essential for the production of pleosporalin A, but not the 2 other final products. The pathway begins with the biosynthesis of the cyclized heptaketide 3-acetonyl-1,6,8-trihydroxy-2-naphthaldehyde by the NR-PKS pgmA. The C-6 hydroxyl group is further methylated by the O-methyltransferase pgmB to yield fusarubinaldehyde which is in turn oxidized by the cytochrome P450 monooxygenase pgmC at C-9. The C-1 hydroxyl group is then methylated spontaneously. Although pgmE, pgmD and pgmH are essential for the production of pleosporalin A, it is not the case for the 2 other final products and it remains difficult to assign a specific function to each enzyme. PgmF and pgmG seem not to be involved in pigment biosynthesis although they were regulated by the cluster-specific transcription factor pgmR. In Aspergillus terreus (strain NIH 2624 / FGSC A1156), this protein is Methyltransferase pgmE.